A 346-amino-acid polypeptide reads, in one-letter code: SUMO-activating enzyme subunit 1 (346 aa).

Residue methionine 1 is modified to N-acetylmethionine. Valine 2 carries the N-acetylvaline; in SUMO-activating enzyme subunit 1, N-terminally processed modification. At serine 12 the chain carries Phosphoserine. Lysine 198 bears the N6-acetyllysine mark.

It belongs to the ubiquitin-activating E1 family. Heterodimer of SAE1 and UBA2/SAE2. The heterodimer corresponds to the two domains that are encoded on a single polypeptide chain in ubiquitin-activating enzyme E1. Interacts with UBE2I.

Its subcellular location is the nucleus. Its pathway is protein modification; protein sumoylation. Its function is as follows. The heterodimer acts as an E1 ligase for SUMO1, SUMO2, SUMO3, and probably SUMO4. It mediates ATP-dependent activation of SUMO proteins followed by formation of a thioester bond between a SUMO protein and a conserved active site cysteine residue on UBA2/SAE2. This Bos taurus (Bovine) protein is SUMO-activating enzyme subunit 1 (SAE1).